A 294-amino-acid polypeptide reads, in one-letter code: Deubiquitinase OTUD6B (294 aa).

The disordered stretch occupies residues 85–120; the sequence is VTSLDLGSEEPVQQPRVSKAQKRREKKAAQEKERDD. The segment covering 111–120 has biased composition (basic and acidic residues); sequence KAAQEKERDD. The 138-residue stretch at 150–287 folds into the OTU domain; the sequence is LQIRQIPSDG…GEHYNSVEQL (138 aa). Residues 155 to 161 form a cys-loop region; sequence IPSDGHC. Asp-158 is a catalytic residue. Cys-161 serves as the catalytic Nucleophile. The segment at 222–232 is variable-loop; sequence IVNTPAWGGQL. Positions 270 to 280 are his-loop; the sequence is YMRHAYGLGEH. His-280 is an active-site residue.

It carries out the reaction Thiol-dependent hydrolysis of ester, thioester, amide, peptide and isopeptide bonds formed by the C-terminal Gly of ubiquitin (a 76-residue protein attached to proteins as an intracellular targeting signal).. Its function is as follows. Deubiquitinating enzyme that may play a role in the ubiquitin-dependent regulation of different cellular processes. In Xenopus laevis (African clawed frog), this protein is Deubiquitinase OTUD6B (otud6b).